Here is a 3179-residue protein sequence, read N- to C-terminus: MKTQTLSLMNINGKRKFLGTNNKIYRKVIINPTSEDDIQKFCRNYFRIYNFSLYNFIRRLISFDAILVYSLFLTVYIFSEINHGETKKYLFIDTAISLFFNIILLIVIESLFELKKLKDVKNANSQYYLRIVPKMSYFEKVMTKDIKVGNIIRIFQGDEFPADVVILYVKNNANAIVDSFKIDGLFRKSIKYAVDKYKIDKDYLKMLSEINGVIRCELPNKNIFCFQGNFKLDKHPRSLLLNYENFALQSSVLKGAEYIDAVVVYTGADTKKNLNIPQKIEENKTFCIKMNNIVYYLIFMYFVFVVLSIVIKTIFFHKKNSFQNSRDSFLSMLEDFVGLYILVLPIMMYSEKSLIYIIQSLRIENDLRMRNTDSEKPKVFNKNKNDSLGNVDLLATSRNGVLVKRKELLVSCVINNVMYGKKDIICSRTNFKLPTLNILDSERKNVSNLLNLDERIFKDPENIFFPTRDFYSFLKLFENKISSIYNPYSSSLSNLLKEKYKNYVNEEILNKNVKLTSFVKSQLTIGYNQICEDDELSYNCYEIKEDSQKENIQSVKIEDFILGLCGCNRIIIYNEKSLDISMNEYKSDNFMETYSKFETENEEYHENDHDEYHNMEHSDDENINSIEYEDICLYNIIRNTGFSIYCYKNTLFLYNLMKECKVYFLTCYHDFLRSNKFSMCILKCGYSINNEKEGGILYVRGYDFNILPYISKEKNNIKKIKNVIKIYTLNYLKVIILCKKQISNEDIAKYIILKSISKKLSFKFYDLIKLFFLYDLEVIGIIGLKNQLREGVKETFNDVINFDIKSWIFANECSKDTYLTALQCNLIVSSSNLFLINYYNLKNTHEEGANILFHNFISSLYKLKSNSYAVVINDESIKNIMTNVESMKIFLCIAMRATVVLFCKLQNETKGKIIRTLYALTSPKLTVLGIGTTLNDAYLLKYSSISVFLSLNEHVNILYNISDYVLQEFKFISELLILGRLNRFSLCKVFLWIIYLKITVVSFYFFHNFDNYFSGSSASSILYTQTTFALLHYFLIIAFSAYEIDLPYKFVRRLPYIYQLSRRKYFLNNNIILLTIIEAILISLTSYYILRLNVFHLITHREFTFHIFILNVFITTEKILLLSKTWHIYFFIMAVLIIGILLIYVNIFTLVDCIKNGKCEFSLFQMENIYFWTSLFPILYINFIFDKLMKYIKNRIYPDISDYLRKYFLRRICCHNNDKFLSQRKIKGINKFVNFEKNDILLKYIPTPKIYKIKDDPTYYNKSKRSKFLYDTFRKVIDINVKYRNQQLNLEYKTYEKGNKLKLRIIVILLFLIYIIIFSSQTIIDINTKSNIHYITMFYIIYFVLACVLLIYIRIRNKATSTFFFFLSRFLLICGFCIELYDNISNDILNVLITYSFTVSYIFFMSFKILEALLVCISILLLTFGVYYEKNKNMIDICTHFCSNPYLSINNLDHMNISCLCKKQIVIFLISLLSFTLICLSMKYYEIFYLKKKFLFRYKQKVNLAKQIEILHTMLPNFLVEYLLISDPKNDGIMVGKNISGEDRGIISVIFCDIDDFQNMVSTLQPHVLVETLDNLYLYFDKCIKYFNCIKIETVFESYLAASGLSEKKNNALDKIMYDTKCAIKLAIAQLSAKYYISYKVLDTREHFSDNSTSYDKYINKNISLKIGIHTGKAISGVIGSVKPQYALFGDTVNTASRMKSTSLPDHIHVSYDTYKYLKEDNTFIWKERKVFIKGKGKMKTYLLVDILDDVKRKGESLNYYSSSNLLLSQLGSEAVSIYEEREDIKEGSMDIIKESSRDIIKEDSRDIIKEISTNISKSSSRNISKSSSRSISDIKEGQIIDKEDLIFKINRMKNKIDSRYSKRIDKESRDKISDKTNHVLDEVVKHSDIHLLNYEINNKRCKKMKGDTNNENKLIGDIFNMYDKKIKYIYKKNYKSKSMENISFIKHYRNTKYKKSDYLLLDNKGESKKFKRNTSYVLESPLHLIGDIVDNNIKRKKKKKEIKTIVSDDMFTSPVNIKEYNYNEQERKKEIVGNLSYDKTKKIFPFIKFTKEGRIKKKKIEKKEKKEKKENNNNFLYNDDYSSYSSPKYGDNENNFVIKYIRERKDFQKKFDHPNFNFSKFLHNYNPMKNKNKNKKNNKNVRRNEYPNYTSSSKDGVSYNFLSDSLFSSDNEYSSDNEYSSDSEKYYKKRFKKNKKIIKFDDLFTKIYIKKKRLLQMNNYDVKGKGKKLKNKGMERNKTKYKNVNEITKMKYFVNNENRDHEVNKEDISKSMQKYFLHISKHKKEQIEDKKKTHKYFHKNVECVYPYAGNNINHNFSRNEKRKYSINLYDHLDEQEKIKGKKKYFNKDKELIGSINKQTERKPKKKNKKNIENKKDKKKIRMITNKTKEKHSNSIISVEEQNMNHNNSLKKKEVNFTGKNEEYLNRANTNCSLGIKEMEEDVYEFHSNNIYYNNQTSYSDDINNTTKLKGMGNNTNDISKNKGKNKLGKKISFFSMNNKYHESEIMNEEDNKNMLNLTQSQIINKDKYNYFTHCPSLKKKKSVFTKINNLFKNYFKSIDVHEKFGFSKKFKFHSKDSDDIKGNNNKISKNRYNNNNNNNNSNYSNIDSGKYSHNNKKNHHHNNNKYHHHNNNKYHHHNNNKYHHQNNNYEKHHHSNNSRVMLSKGEKTEKNENVDYAYQFDNYDKKLLKKLTSNLQLNKKNVKNFNMFYYKFNDEELEEEYTRNYYREIINIDLTKKLIIIFIFTEIFLSLCNIIELSFYEKKLRYNDSIVIIWLIRSIYLFIITYIWIILKTKLKEYKNNSSKMMWTIFILNIFLCSWGIILIDLSCIHYSMLLGNKNERALFFMKDASELIICIQLIFIKNMLFKHKFFFFVFFYIFLIYSFSKLFSIHTCQTHICCSIILFISINILYFWYSEYLDRIQFLVKRKRNRMEKISQDFLTKILPRQVLEEYQNDNLQLTYKHEKIAFLFADIVGFTKWSKTVSPKEVLKLLQKLISKIDKDTIKLGLYKLFTIGDAYVATSQPNSSITDESEALEGILNILKLAKLILHNINTIKIQFNKHDFNMRIGLHYGSCVGGIIGSVRIRYDMWGLDVLIANKIESNGIPGEIICSEQFRHFFIQNEPQAKLNFWYYKSISINDQDIKLYVIEDKNYEEDYDPKVIDYTTLLKLRQKKGLRS.

The Cytoplasmic segment spans residues 1–60 (MKTQTLSLMNINGKRKFLGTNNKIYRKVIINPTSEDDIQKFCRNYFRIYNFSLYNFIRRL). The helical transmembrane segment at 61 to 81 (ISFDAILVYSLFLTVYIFSEI) threads the bilayer. Residues 82-88 (NHGETKK) lie on the Extracellular side of the membrane. The chain crosses the membrane as a helical span at residues 89–109 (YLFIDTAISLFFNIILLIVIE). Residues 110–295 (SLFELKKLKD…FCIKMNNIVY (186 aa)) are Cytoplasmic-facing. Residues 296-316 (YLIFMYFVFVVLSIVIKTIFF) form a helical membrane-spanning segment. Over 317–328 (HKKNSFQNSRDS) the chain is Extracellular. Residues 329 to 349 (FLSMLEDFVGLYILVLPIMMY) traverse the membrane as a helical segment. Topologically, residues 350-988 (SEKSLIYIIQ…GRLNRFSLCK (639 aa)) are cytoplasmic. The chain crosses the membrane as a helical span at residues 989–1009 (VFLWIIYLKITVVSFYFFHNF). The Extracellular segment spans residues 1010–1020 (DNYFSGSSASS). Residues 1021-1041 (ILYTQTTFALLHYFLIIAFSA) form a helical membrane-spanning segment. At 1042–1069 (YEIDLPYKFVRRLPYIYQLSRRKYFLNN) the chain is on the cytoplasmic side. Residues 1070–1090 (NIILLTIIEAILISLTSYYIL) form a helical membrane-spanning segment. Residues 1091–1102 (RLNVFHLITHRE) lie on the Extracellular side of the membrane. The helical transmembrane segment at 1103–1123 (FTFHIFILNVFITTEKILLLS) threads the bilayer. Over 1124-1127 (KTWH) the chain is Cytoplasmic. A helical membrane pass occupies residues 1128-1148 (IYFFIMAVLIIGILLIYVNIF). The Extracellular portion of the chain corresponds to 1149-1168 (TLVDCIKNGKCEFSLFQMEN). Residues 1169–1189 (IYFWTSLFPILYINFIFDKLM) traverse the membrane as a helical segment. Over 1190–1304 (KYIKNRIYPD…YEKGNKLKLR (115 aa)) the chain is Cytoplasmic. Residues 1305–1325 (IIVILLFLIYIIIFSSQTIID) form a helical membrane-spanning segment. The Extracellular segment spans residues 1326–1331 (INTKSN). A helical membrane pass occupies residues 1332–1352 (IHYITMFYIIYFVLACVLLIY). The Cytoplasmic portion of the chain corresponds to 1353–1360 (IRIRNKAT). Residues 1361–1381 (STFFFFLSRFLLICGFCIELY) traverse the membrane as a helical segment. Residues 1382-1401 (DNISNDILNVLITYSFTVSY) are Extracellular-facing. A glycan (N-linked (GlcNAc...) asparagine) is linked at Asn1383. The helical transmembrane segment at 1402–1422 (IFFMSFKILEALLVCISILLL) threads the bilayer. The Cytoplasmic segment spans residues 1423–1464 (TFGVYYEKNKNMIDICTHFCSNPYLSINNLDHMNISCLCKKQ). A helical transmembrane segment spans residues 1465-1485 (IVIFLISLLSFTLICLSMKYY). The Extracellular portion of the chain corresponds to 1486–1507 (EIFYLKKKFLFRYKQKVNLAKQ). The chain crosses the membrane as a helical span at residues 1508–1528 (IEILHTMLPNFLVEYLLISDP). Topologically, residues 1529–2739 (KNDGIMVGKN…IINIDLTKKL (1211 aa)) are cytoplasmic. One can recognise a Guanylate cyclase 1 domain in the interval 1548–1700 (SVIFCDIDDF…DTVNTASRMK (153 aa)). Disordered stretches follow at residues 2123-2153 (LHNYNPMKNKNKNKKNNKNVRRNEYPNYTSS), 2355-2379 (SINKQTERKPKKKNKKNIENKKDKK), and 2576-2656 (KDSD…HHHS). Residues 2131 to 2142 (NKNKNKKNNKNV) show a composition bias toward basic residues. The span at 2584-2607 (NNNKISKNRYNNNNNNNNSNYSNI) shows a compositional bias: low complexity. The span at 2614–2645 (HNNKKNHHHNNNKYHHHNNNKYHHHNNNKYHH) shows a compositional bias: basic residues. The chain crosses the membrane as a helical span at residues 2740-2760 (IIIFIFTEIFLSLCNIIELSF). The Extracellular portion of the chain corresponds to 2761 to 2770 (YEKKLRYNDS). The N-linked (GlcNAc...) asparagine glycan is linked to Asn2768. A helical membrane pass occupies residues 2771–2791 (IVIIWLIRSIYLFIITYIWII). Over 2792–2809 (LKTKLKEYKNNSSKMMWT) the chain is Cytoplasmic. The chain crosses the membrane as a helical span at residues 2810–2830 (IFILNIFLCSWGIILIDLSCI). The Extracellular portion of the chain corresponds to 2831-2842 (HYSMLLGNKNER). Residues 2843–2863 (ALFFMKDASELIICIQLIFIK) form a helical membrane-spanning segment. At 2864 to 2870 (NMLFKHK) the chain is on the cytoplasmic side. The helical transmembrane segment at 2871 to 2891 (FFFFVFFYIFLIYSFSKLFSI) threads the bilayer. The Extracellular segment spans residues 2892–2895 (HTCQ). Residues 2896-2916 (THICCSIILFISINILYFWYS) traverse the membrane as a helical segment. The Cytoplasmic segment spans residues 2917-3179 (EYLDRIQFLV…KLRQKKGLRS (263 aa)). One can recognise a Guanylate cyclase 2 domain in the interval 2968-3102 (AFLFADIVGF…LDVLIANKIE (135 aa)). Mg(2+) is bound by residues Asp2973, Ile2974, and Asp3017.

In the N-terminal section; belongs to the cation transport ATPase (P-type) (TC 3.A.3) family. Type IV subfamily. This sequence in the C-terminal section; belongs to the adenylyl cyclase class-4/guanylyl cyclase family. Mg(2+) is required as a cofactor. Mn(2+) serves as cofactor.

The protein resides in the membrane. The catalysed reaction is GTP = 3',5'-cyclic GMP + diphosphate. Basal guanylate activity of the recombinant guanylate cyclase domains 1 and 2 is not modulated by an increase in Ca(2+) levels or by the gametogenesis inducer xanthurenic acid. Catalyzes the synthesis of the second messenger cGMP from GTP. Regulates cGMP production in gametocytes; however, is dispensable for the initiation of gametogenesis. Does not have adenylate cyclase activity. The polypeptide is Guanylate cyclase beta (Plasmodium falciparum (isolate 3D7)).